A 740-amino-acid chain; its full sequence is Melanoma-associated antigen D4 (740 aa).

The span at 1-11 (MAEGSYRKESE) shows a compositional bias: basic and acidic residues. Disordered stretches follow at residues 1 to 27 (MAEG…EVGE), 139 to 208 (ATHQ…GPST), 242 to 298 (PAGV…ALAK), and 321 to 377 (IPEP…ASQP). The segment covering 14-27 (NVEDMDEGSDEVGE) has biased composition (acidic residues). Polar residues-rich tracts occupy residues 141-155 (HQAS…TSAA) and 162-175 (PETS…SRML). Over residues 185–207 (APARSPQPQTSSQAQEAAAEGPS) the composition is skewed to low complexity. A compositionally biased stretch (low complexity) spans 321–337 (IPEPESAAATSQQSAEP). Positions 354–363 (DEYESGEEER) are enriched in acidic residues. In terms of domain architecture, MAGE spans 414 to 612 (LQERANKLVK…REWRAHFLEA (199 aa)). The interval 697–722 (WRAGVSSGTNGAASASMLDGPSTSST) is disordered.

As to quaternary structure, interacts with TRIM27.

Its function is as follows. May enhance ubiquitin ligase activity of RING-type zinc finger-containing E3 ubiquitin-protein ligases. Proposed to act through recruitment and/or stabilization of the Ubl-conjugating enzyme (E2) at the E3:substrate complex. This Bos taurus (Bovine) protein is Melanoma-associated antigen D4 (MAGED4).